A 367-amino-acid polypeptide reads, in one-letter code: Pantothenate kinase CAB1 (367 aa).

Belongs to the type II pantothenate kinase family.

It is found in the cytoplasm. Its subcellular location is the nucleus. It carries out the reaction (R)-pantothenate + ATP = (R)-4'-phosphopantothenate + ADP + H(+). The protein operates within cofactor biosynthesis; coenzyme A biosynthesis; CoA from (R)-pantothenate: step 1/5. With respect to regulation, regulated by feedback inhibition by malonyl-CoA. Plays a role in the physiological regulation of the intracellular CoA concentration. The sequence is that of Pantothenate kinase CAB1 (CAB1) from Saccharomyces cerevisiae (strain ATCC 204508 / S288c) (Baker's yeast).